The sequence spans 479 residues: Protein nucleotidyltransferase YdiU (479 aa).

ATP-binding residues include Gly-83, Gly-85, Arg-86, Lys-106, Asp-118, Gly-119, Arg-169, and Arg-176. The Proton acceptor role is filled by Asp-245. Residues Asn-246 and Asp-255 each contribute to the Mg(2+) site. Asp-255 provides a ligand contact to ATP.

The protein belongs to the SELO family. Mg(2+) is required as a cofactor. It depends on Mn(2+) as a cofactor.

The catalysed reaction is L-seryl-[protein] + ATP = 3-O-(5'-adenylyl)-L-seryl-[protein] + diphosphate. The enzyme catalyses L-threonyl-[protein] + ATP = 3-O-(5'-adenylyl)-L-threonyl-[protein] + diphosphate. It carries out the reaction L-tyrosyl-[protein] + ATP = O-(5'-adenylyl)-L-tyrosyl-[protein] + diphosphate. It catalyses the reaction L-histidyl-[protein] + UTP = N(tele)-(5'-uridylyl)-L-histidyl-[protein] + diphosphate. The catalysed reaction is L-seryl-[protein] + UTP = O-(5'-uridylyl)-L-seryl-[protein] + diphosphate. The enzyme catalyses L-tyrosyl-[protein] + UTP = O-(5'-uridylyl)-L-tyrosyl-[protein] + diphosphate. Functionally, nucleotidyltransferase involved in the post-translational modification of proteins. It can catalyze the addition of adenosine monophosphate (AMP) or uridine monophosphate (UMP) to a protein, resulting in modifications known as AMPylation and UMPylation. The protein is Protein nucleotidyltransferase YdiU of Erwinia tasmaniensis (strain DSM 17950 / CFBP 7177 / CIP 109463 / NCPPB 4357 / Et1/99).